A 507-amino-acid polypeptide reads, in one-letter code: MGVFRFISISLAAVSAANAAQILSMPHAQTVPHSYIVMMKDDTSDDDFNHHQSWLQSTHTHNITRRATIQNAGMRHKYNFRKMKGYSGIFDEETIKDIAKDPKVMFVEPDTIISVNGKVEQSNVPSWGLARISNSQPGANSYVYDSSAGEGITVYSVDTGVDINHEDFEGRAIWGSNQVNDGDDRDGSGHGTHTSGTMVGKEFGIAKKAKLVAVKVLGNDGSGPTSGIVAGINWCVEHARQNGGTDKAVMNMSLGGSSSSALNRAAAQAVEQGMFLSVAAGNENQDARSSSPASEPSVCTVGSSAEDDSRSSFSNWGPALDLFAPGSNIISARPGGGSQSMSGTSMAAPHVAGLAAYLMALEGISGGAVCDRLKELGSSSITDVGPGTPTNVLISNGGAKGGNPKPAPGPSPNPSQPSEPQQPAPSQPGEPGESFPGEPFPGEPFPGEPFPGESSPGESAPAPAPMPPSPQHPHTPYPGGDNFDFDGYWKKYFGGEHWRKMFGSFWN.

The first 19 residues, 1-19, serve as a signal peptide directing secretion; sequence MGVFRFISISLAAVSAANA. Residues 20 to 116 constitute a propeptide that is removed on maturation; it reads AQILSMPHAQ…VEPDTIISVN (97 aa). One can recognise an Inhibitor I9 domain in the interval 34–113; sequence SYIVMMKDDT…VMFVEPDTII (80 aa). One can recognise a Peptidase S8 domain in the interval 126-400; the sequence is SWGLARISNS…NVLISNGGAK (275 aa). Active-site charge relay system residues include D158 and H190. The segment at 175-198 is disordered; that stretch reads GSNQVNDGDDRDGSGHGTHTSGTM. A glycan (N-linked (GlcNAc...) asparagine) is linked at N251. Polar residues predominate over residues 282–294; it reads NENQDARSSSPAS. Residues 282–312 form a disordered region; the sequence is NENQDARSSSPASEPSVCTVGSSAEDDSRSS. Residue S345 is the Charge relay system of the active site. The span at 378–394 shows a compositional bias: polar residues; sequence SSSITDVGPGTPTNVLI. The disordered stretch occupies residues 378-486; sequence SSSITDVGPG…YPGGDNFDFD (109 aa). Pro residues-rich tracts occupy residues 405–428 and 438–449; these read KPAP…PSQP and EPFPGEPFPGEP. Over residues 450–461 the composition is skewed to low complexity; it reads FPGESSPGESAP. Pro residues predominate over residues 462–476; sequence APAPMPPSPQHPHTP.

This sequence belongs to the peptidase S8 family.

It localises to the secreted. Functionally, secreted subtilisin-like serine protease with keratinolytic activity that contributes to pathogenicity. The chain is Subtilisin-like protease 1 (SUB1) from Trichophyton tonsurans (Scalp ringworm fungus).